The chain runs to 364 residues: tRNA 2-selenouridine synthase (364 aa).

One can recognise a Rhodanese domain in the interval 14-137 (LIADTPIIDV…LRQTTIQATI (124 aa)). Cys97 functions as the S-selanylcysteine intermediate in the catalytic mechanism.

This sequence belongs to the SelU family. Monomer.

It catalyses the reaction 5-methylaminomethyl-2-thiouridine(34) in tRNA + selenophosphate + (2E)-geranyl diphosphate + H2O + H(+) = 5-methylaminomethyl-2-selenouridine(34) in tRNA + (2E)-thiogeraniol + phosphate + diphosphate. The catalysed reaction is 5-methylaminomethyl-2-thiouridine(34) in tRNA + (2E)-geranyl diphosphate = 5-methylaminomethyl-S-(2E)-geranyl-thiouridine(34) in tRNA + diphosphate. It carries out the reaction 5-methylaminomethyl-S-(2E)-geranyl-thiouridine(34) in tRNA + selenophosphate + H(+) = 5-methylaminomethyl-2-(Se-phospho)selenouridine(34) in tRNA + (2E)-thiogeraniol. The enzyme catalyses 5-methylaminomethyl-2-(Se-phospho)selenouridine(34) in tRNA + H2O = 5-methylaminomethyl-2-selenouridine(34) in tRNA + phosphate. In terms of biological role, involved in the post-transcriptional modification of the uridine at the wobble position (U34) of tRNA(Lys), tRNA(Glu) and tRNA(Gln). Catalyzes the conversion of 2-thiouridine (S2U-RNA) to 2-selenouridine (Se2U-RNA). Acts in a two-step process involving geranylation of 2-thiouridine (S2U) to S-geranyl-2-thiouridine (geS2U) and subsequent selenation of the latter derivative to 2-selenouridine (Se2U) in the tRNA chain. The polypeptide is tRNA 2-selenouridine synthase (Escherichia coli O8 (strain IAI1)).